Reading from the N-terminus, the 711-residue chain is GDNF-inducible zinc finger protein 1 (711 aa).

The BTB domain maps to 31 to 103; that stretch reads CDVTVSVEYQ…VYTAKVQVEE (73 aa). Low complexity predominate over residues 153-168; that stretch reads SGSQVSAAPAPRASVA. 2 disordered regions span residues 153 to 220 and 243 to 312; these read SGSQ…PKIR and RLRE…EGEK. 3 stretches are compositionally biased toward basic and acidic residues: residues 197 to 212, 243 to 252, and 265 to 277; these read PPKK…KEVV, RLREQQKTAE, and SPDR…EQVS. Residues 298 to 309 are compositionally biased toward acidic residues; the sequence is EEEEEEEEEDEE. 10 C2H2-type zinc fingers span residues 317 to 340, 348 to 371, 377 to 400, 407 to 429, 435 to 457, 463 to 485, 491 to 513, 519 to 541, 547 to 569, and 575 to 597; these read FKCS…KHRH, YRCD…RHVH, FPCE…LQVH, HRCG…ERTH, YGCT…MRIH, FVCD…KRCH, FMCE…NRIH, FKCE…IKVH, YCCD…RRIH, and FMCN…TSIH. S613 carries the phosphoserine modification.

The protein belongs to the krueppel C2H2-type zinc-finger protein family. In terms of assembly, interacts with NCL. In terms of tissue distribution, expressed in adult brain, heart, skeletal muscle, kidney and liver. Also detected in fetal brain and kidney, and at lower levels in fetal lung and liver.

It is found in the cytoplasm. The protein resides in the nucleus. It localises to the nucleoplasm. Its subcellular location is the nucleolus. Its function is as follows. Transcriptional repressor that binds the GZF1 responsive element (GRE) (consensus: 5'-TGCGCN[TG][CA]TATA-3'). May be regulating VSX2/HOX10 expression. This is GDNF-inducible zinc finger protein 1 from Homo sapiens (Human).